Reading from the N-terminus, the 342-residue chain is Glycerol-1-phosphate dehydrogenase [NAD(P)+] (342 aa).

Residues 84 to 88 and 106 to 109 contribute to the NAD(+) site; these read GRPID and TAAS. Asp111 provides a ligand contact to substrate. Ser115 is a binding site for NAD(+). Substrate is bound at residue Asp160. Residues Asp160 and His241 each coordinate Zn(2+). Residue His245 coordinates substrate. His260 provides a ligand contact to Zn(2+).

Belongs to the glycerol-1-phosphate dehydrogenase family. Homodimer. Requires Zn(2+) as cofactor.

It is found in the cytoplasm. The enzyme catalyses sn-glycerol 1-phosphate + NAD(+) = dihydroxyacetone phosphate + NADH + H(+). It catalyses the reaction sn-glycerol 1-phosphate + NADP(+) = dihydroxyacetone phosphate + NADPH + H(+). The protein operates within membrane lipid metabolism; glycerophospholipid metabolism. Catalyzes the NAD(P)H-dependent reduction of dihydroxyacetonephosphate (DHAP or glycerone phosphate) to glycerol 1-phosphate (G1P). The G1P thus generated is used as the glycerophosphate backbone of phospholipids in the cellular membranes of Archaea. In Pyrobaculum aerophilum (strain ATCC 51768 / DSM 7523 / JCM 9630 / CIP 104966 / NBRC 100827 / IM2), this protein is Glycerol-1-phosphate dehydrogenase [NAD(P)+].